Reading from the N-terminus, the 610-residue chain is UvrABC system protein C (610 aa).

The GIY-YIG domain occupies 16–94 (SQPGVYSMYD…IKLYQPRYNV (79 aa)). A UVR domain is found at 204–239 (QQVLNQLVERMELASRALNFEDAAHARDQIQAVRRV).

It belongs to the UvrC family. In terms of assembly, interacts with UvrB in an incision complex.

It is found in the cytoplasm. Its function is as follows. The UvrABC repair system catalyzes the recognition and processing of DNA lesions. UvrC both incises the 5' and 3' sides of the lesion. The N-terminal half is responsible for the 3' incision and the C-terminal half is responsible for the 5' incision. The sequence is that of UvrABC system protein C from Sodalis glossinidius (strain morsitans).